A 55-amino-acid polypeptide reads, in one-letter code: Mitochondrial import receptor subunit TOM7 homolog (55 aa).

The Cytoplasmic segment spans residues 1 to 20 (MVKLSKEAKQRLQQLFKGGQ). Residues 21–36 (FAIRWGFIPLVIYLGF) form a helical membrane-spanning segment. The Mitochondrial intermembrane portion of the chain corresponds to 37–55 (KRGADPGMPEPTVLSLLWG).

This sequence belongs to the Tom7 family. In terms of assembly, forms part of the preprotein translocase complex of the outer mitochondrial membrane (TOM complex) which consists of at least 7 different proteins (TOMM5, TOMM6, TOMM7, TOMM20, TOMM22, TOMM40 and TOMM70).

The protein localises to the mitochondrion outer membrane. Functionally, required for assembly and stability of the TOM complex. Positive regulator of PRKN translocation to damaged mitochondria. Acts probably by stabilizing PINK1 on the outer membrane of depolarized mitochondria. In Bos taurus (Bovine), this protein is Mitochondrial import receptor subunit TOM7 homolog (TOMM7).